Here is a 510-residue protein sequence, read N- to C-terminus: MKLKPIEVAEILQKEIANINCLSELEEVGQVITVGDGIAQIYGLANVKSGEVVEFKSGVKGLVLNLENDSVGAVIMGDDNQVQQGDNVKRTKEVLEVPVGKALLGRVVDALGNPIDGKGDIASKEYRHIEMKAPGIIERTSVSEPVQTGIKAIDSLIPIGRGQRELIIGDRQTGKTAIAVDTIINQKQAHSLTNESDKIYCIYVAIGQKRSSVAQIVKKLEDAGAMDYTLIVSATASEAAALQFIAPYSACSMGEYFRDNGMHALIIYDDLSKHAVAYRQISLLLRRPPGREAYPGDVFYLHSRLLERAAKMSEAKGSGSLTALPIIETQAGDVSAYIPTNVISITDGQIFLESELFYKGVRPAVNVGISVSRVGSAAQIKAMKQVAGSVKLELAQFRELESFSQFGSDLDPATKVQIDHGKRLVEILKQAQYHPFPVEEQIVSIYVGTKKYLNDVPLQQVKEFEDKMLTEIRLNKKDILESIKNEQCITEETEQKLKAFLENFVKEFVK.

G169 to T176 contributes to the ATP binding site.

The protein belongs to the ATPase alpha/beta chains family. In terms of assembly, F-type ATPases have 2 components, CF(1) - the catalytic core - and CF(0) - the membrane proton channel. CF(1) has five subunits: alpha(3), beta(3), gamma(1), delta(1), epsilon(1). CF(0) has three main subunits: a(1), b(2) and c(9-12). The alpha and beta chains form an alternating ring which encloses part of the gamma chain. CF(1) is attached to CF(0) by a central stalk formed by the gamma and epsilon chains, while a peripheral stalk is formed by the delta and b chains.

Its subcellular location is the cell inner membrane. The catalysed reaction is ATP + H2O + 4 H(+)(in) = ADP + phosphate + 5 H(+)(out). Produces ATP from ADP in the presence of a proton gradient across the membrane. The alpha chain is a regulatory subunit. This Rickettsia peacockii (strain Rustic) protein is ATP synthase subunit alpha.